The sequence spans 389 residues: uncharacterized protein (389 aa).

The first 29 residues, 1–29 (MQPSFTPSGGKWLSIAVILLVIGLVVGFA), serve as a signal peptide directing secretion.

This sequence belongs to the bacterial solute-binding protein 1 family. WtpA subfamily.

This is an uncharacterized protein from Thermoplasma volcanium (strain ATCC 51530 / DSM 4299 / JCM 9571 / NBRC 15438 / GSS1).